A 630-amino-acid polypeptide reads, in one-letter code: Chaperone protein HtpG (630 aa).

The tract at residues 1-339 (MKGQETRGFQ…SNDLPLNVSR (339 aa)) is a; substrate-binding. Residues 340–555 (EILQDNSITR…VDEMSTQMAK (216 aa)) are b. The interval 556 to 630 (LFAAAGQQVP…MNQLLLSEKA (75 aa)) is c.

It belongs to the heat shock protein 90 family. Homodimer.

It localises to the cytoplasm. In terms of biological role, molecular chaperone. Has ATPase activity. In Photorhabdus laumondii subsp. laumondii (strain DSM 15139 / CIP 105565 / TT01) (Photorhabdus luminescens subsp. laumondii), this protein is Chaperone protein HtpG.